An 853-amino-acid polypeptide reads, in one-letter code: Transcription factor CPH2 (853 aa).

2 disordered regions span residues 165–209 (EPPI…DKNS) and 296–353 (NMNP…VHHP). Low complexity predominate over residues 180–194 (TTTVSSTNSITNTTK). The bHLH domain maps to 205–274 (KDKNSHNMIE…TKATEYIKHL (70 aa)). The span at 301-315 (SLPPPPQQMQAPPQP) shows a compositional bias: pro residues. Residues 330 to 352 (TPASQYPSPQQQVSPTQQQTVHH) show a composition bias toward low complexity.

The protein localises to the nucleus. Functionally, transcription factor that positively controls filamentous growth, virulence, and invasiveness. Binds directly to the two SRE-1-like elements upstream of TEC1 and thus positively regulates expression of this important hyphal growth regulator. Functions independently of known signaling cascades involving EFG1. Also regulates gene expression during intestinal colonization but is not involved in host cell adhesion. The chain is Transcription factor CPH2 (CPH2) from Candida albicans (strain SC5314 / ATCC MYA-2876) (Yeast).